The sequence spans 247 residues: Probable transcriptional regulatory protein PC1_1817 (247 aa).

The protein belongs to the TACO1 family.

It localises to the cytoplasm. This chain is Probable transcriptional regulatory protein PC1_1817, found in Pectobacterium carotovorum subsp. carotovorum (strain PC1).